The sequence spans 225 residues: ATP-dependent dethiobiotin synthetase BioD (225 aa).

Residue 12 to 17 (GVGKTV) participates in ATP binding. Position 16 (Thr16) interacts with Mg(2+). The active site involves Lys37. Position 41 (Thr41) interacts with substrate. ATP is bound by residues Asp46, 105–108 (EGAG), 166–167 (GS), and 196–198 (PEG). 2 residues coordinate Mg(2+): Asp46 and Glu105.

This sequence belongs to the dethiobiotin synthetase family. Homodimer. Mg(2+) serves as cofactor.

The protein resides in the cytoplasm. It catalyses the reaction (7R,8S)-7,8-diammoniononanoate + CO2 + ATP = (4R,5S)-dethiobiotin + ADP + phosphate + 3 H(+). The protein operates within cofactor biosynthesis; biotin biosynthesis; biotin from 7,8-diaminononanoate: step 1/2. Functionally, catalyzes a mechanistically unusual reaction, the ATP-dependent insertion of CO2 between the N7 and N8 nitrogen atoms of 7,8-diaminopelargonic acid (DAPA, also called 7,8-diammoniononanoate) to form a ureido ring. The polypeptide is ATP-dependent dethiobiotin synthetase BioD (Mycobacteroides abscessus (strain ATCC 19977 / DSM 44196 / CCUG 20993 / CIP 104536 / JCM 13569 / NCTC 13031 / TMC 1543 / L948) (Mycobacterium abscessus)).